Here is a 312-residue protein sequence, read N- to C-terminus: tRNA dimethylallyltransferase (312 aa).

15-22 (GPTAAGKS) serves as a coordination point for ATP. Position 17 to 22 (17 to 22 (TAAGKS)) interacts with substrate. The interaction with substrate tRNA stretch occupies residues 40-43 (DSMQ).

Belongs to the IPP transferase family. Monomer. Requires Mg(2+) as cofactor.

The catalysed reaction is adenosine(37) in tRNA + dimethylallyl diphosphate = N(6)-dimethylallyladenosine(37) in tRNA + diphosphate. Catalyzes the transfer of a dimethylallyl group onto the adenine at position 37 in tRNAs that read codons beginning with uridine, leading to the formation of N6-(dimethylallyl)adenosine (i(6)A). The chain is tRNA dimethylallyltransferase from Streptomyces avermitilis (strain ATCC 31267 / DSM 46492 / JCM 5070 / NBRC 14893 / NCIMB 12804 / NRRL 8165 / MA-4680).